Consider the following 139-residue polypeptide: Ribulose bisphosphate carboxylase small subunit, chromosomal (139 aa).

It belongs to the RuBisCO small chain family. As to quaternary structure, heterohexadecamer of 8 large and 8 small subunits.

Its function is as follows. RuBisCO catalyzes two reactions: the carboxylation of D-ribulose 1,5-bisphosphate, the primary event in carbon dioxide fixation, as well as the oxidative fragmentation of the pentose substrate. Both reactions occur simultaneously and in competition at the same active site. Although the small subunit is not catalytic it is essential for maximal activity. The chain is Ribulose bisphosphate carboxylase small subunit, chromosomal from Cupriavidus necator (Alcaligenes eutrophus).